The primary structure comprises 104 residues: uncharacterized protein (104 aa).

This is an uncharacterized protein from Bacillus subtilis (strain 168).